The chain runs to 139 residues: Plastocyanin (139 aa).

A signal peptide spans methionine 1–alanine 34. The Plastocyanin-like domain maps to glutamate 35–glycine 139. Histidine 73, cysteine 123, histidine 126, and methionine 131 together coordinate Cu cation.

Belongs to the plastocyanin family. The cofactor is Cu(2+).

The protein localises to the cellular thylakoid membrane. Functionally, participates in electron transfer between P700 and the cytochrome b6-f complex in photosystem I. The sequence is that of Plastocyanin (petE) from Nostoc sp. (strain PCC 7120 / SAG 25.82 / UTEX 2576).